The chain runs to 501 residues: Glycerol kinase (501 aa).

Residue T11 participates in ADP binding. Residues T11, T12, and S13 each contribute to the ATP site. T11 is a sn-glycerol 3-phosphate binding site. Position 15 (R15) interacts with ADP. Sn-glycerol 3-phosphate-binding residues include R81, E82, Y133, and D242. Residues R81, E82, Y133, D242, and Q243 each contribute to the glycerol site. Residues T264 and G307 each coordinate ADP. The ATP site is built by T264, G307, Q311, and G409. ADP is bound by residues G409 and N413.

Belongs to the FGGY kinase family.

The enzyme catalyses glycerol + ATP = sn-glycerol 3-phosphate + ADP + H(+). It functions in the pathway polyol metabolism; glycerol degradation via glycerol kinase pathway; sn-glycerol 3-phosphate from glycerol: step 1/1. Its activity is regulated as follows. Inhibited by fructose 1,6-bisphosphate (FBP). Functionally, key enzyme in the regulation of glycerol uptake and metabolism. Catalyzes the phosphorylation of glycerol to yield sn-glycerol 3-phosphate. The sequence is that of Glycerol kinase from Borreliella burgdorferi (strain ATCC 35210 / DSM 4680 / CIP 102532 / B31) (Borrelia burgdorferi).